The following is a 190-amino-acid chain: uncharacterized protein (190 aa).

This is an uncharacterized protein from Archaeoglobus fulgidus (strain ATCC 49558 / DSM 4304 / JCM 9628 / NBRC 100126 / VC-16).